A 475-amino-acid chain; its full sequence is ATP synthase subunit beta (475 aa).

An ATP-binding site is contributed by 152 to 159; that stretch reads GGAGVGKT.

It belongs to the ATPase alpha/beta chains family. In terms of assembly, F-type ATPases have 2 components, CF(1) - the catalytic core - and CF(0) - the membrane proton channel. CF(1) has five subunits: alpha(3), beta(3), gamma(1), delta(1), epsilon(1). CF(0) has three main subunits: a(1), b(2) and c(9-12). The alpha and beta chains form an alternating ring which encloses part of the gamma chain. CF(1) is attached to CF(0) by a central stalk formed by the gamma and epsilon chains, while a peripheral stalk is formed by the delta and b chains.

The protein localises to the cell inner membrane. The catalysed reaction is ATP + H2O + 4 H(+)(in) = ADP + phosphate + 5 H(+)(out). Its function is as follows. Produces ATP from ADP in the presence of a proton gradient across the membrane. The catalytic sites are hosted primarily by the beta subunits. The protein is ATP synthase subunit beta of Wolbachia sp. subsp. Drosophila simulans (strain wRi).